The chain runs to 293 residues: Elongation factor Ts (293 aa).

The involved in Mg(2+) ion dislocation from EF-Tu stretch occupies residues 79-82 (TDFV).

The protein belongs to the EF-Ts family.

It is found in the cytoplasm. Functionally, associates with the EF-Tu.GDP complex and induces the exchange of GDP to GTP. It remains bound to the aminoacyl-tRNA.EF-Tu.GTP complex up to the GTP hydrolysis stage on the ribosome. The polypeptide is Elongation factor Ts (Bacillus pumilus (strain SAFR-032)).